Reading from the N-terminus, the 204-residue chain is N-(5'-phosphoribosyl)anthranilate isomerase (204 aa).

Belongs to the TrpF family.

The enzyme catalyses N-(5-phospho-beta-D-ribosyl)anthranilate = 1-(2-carboxyphenylamino)-1-deoxy-D-ribulose 5-phosphate. Its pathway is amino-acid biosynthesis; L-tryptophan biosynthesis; L-tryptophan from chorismate: step 3/5. The chain is N-(5'-phosphoribosyl)anthranilate isomerase from Syntrophomonas wolfei subsp. wolfei (strain DSM 2245B / Goettingen).